The sequence spans 682 residues: Potassium-transporting ATPase ATP-binding subunit (682 aa).

Transmembrane regions (helical) follow at residues 35-55 (VMFI…AMAG), 62-82 (ATFT…ANFA), 219-239 (IALT…TATI), and 254-274 (VLVA…LSAI). Aspartate 307 acts as the 4-aspartylphosphate intermediate in catalysis. Residues aspartate 344, glutamate 348, 377–384 (FTAQTRMS), and lysine 395 each bind ATP. Aspartate 518 and aspartate 522 together coordinate Mg(2+). The next 3 helical transmembrane spans lie at 588–608 (FAII…LNVM), 616–636 (AILS…PLAL), and 656–676 (IYGL…DLLL).

Belongs to the cation transport ATPase (P-type) (TC 3.A.3) family. Type IA subfamily. In terms of assembly, the system is composed of three essential subunits: KdpA, KdpB and KdpC.

The protein resides in the cell inner membrane. It carries out the reaction K(+)(out) + ATP + H2O = K(+)(in) + ADP + phosphate + H(+). Part of the high-affinity ATP-driven potassium transport (or Kdp) system, which catalyzes the hydrolysis of ATP coupled with the electrogenic transport of potassium into the cytoplasm. This subunit is responsible for energy coupling to the transport system and for the release of the potassium ions to the cytoplasm. This Klebsiella pneumoniae subsp. pneumoniae (strain ATCC 700721 / MGH 78578) protein is Potassium-transporting ATPase ATP-binding subunit.